Here is a 429-residue protein sequence, read N- to C-terminus: Alpha-galactosidase A (429 aa).

The first 31 residues, 1-31, serve as a signal peptide directing secretion; that stretch reads MQLRNPELHLGCALALRFLALVSWDIPGARA. Disulfide bonds link Cys52/Cys94 and Cys56/Cys63. A glycan (N-linked (GlcNAc...) asparagine) is linked at Asn139. A disulfide bridge connects residues Cys142 and Cys172. Asp170 serves as the catalytic Nucleophile. Residue Asn192 is glycosylated (N-linked (GlcNAc...) asparagine). Cys202 and Cys223 are disulfide-bonded. Substrate is bound at residue 203–207; that stretch reads EWPLY. N-linked (GlcNAc...) asparagine glycosylation is present at Asn215. Asp231 functions as the Proton donor in the catalytic mechanism. Cys378 and Cys382 are joined by a disulfide.

This sequence belongs to the glycosyl hydrolase 27 family. In terms of assembly, homodimer.

The protein localises to the lysosome. The catalysed reaction is Hydrolysis of terminal, non-reducing alpha-D-galactose residues in alpha-D-galactosides, including galactose oligosaccharides, galactomannans and galactolipids.. It carries out the reaction a globoside Gb3Cer (d18:1(4E)) + H2O = a beta-D-Gal-(1-&gt;4)-beta-D-Glc-(1&lt;-&gt;1)-Cer(d18:1(4E)) + D-galactose. It catalyses the reaction a globoside Gb3Cer + H2O = a beta-D-galactosyl-(1-&gt;4)-beta-D-glucosyl-(1&lt;-&gt;1)-ceramide + D-galactose. Its activity is regulated as follows. Galactosylgalactosylglucosylceramidase activity is stimulated by saposin B and ammonium chloride. Functionally, catalyzes the hydrolysis of glycosphingolipids and participates in their degradation in the lysosome. This chain is Alpha-galactosidase A, found in Homo sapiens (Human).